A 62-amino-acid chain; its full sequence is Sperm protamine P1 (62 aa).

A disordered region spans residues 1-62 (MARYRHSRSR…RYSRRRRRRY (62 aa)).

The protein belongs to the protamine P1 family. As to expression, testis.

Its subcellular location is the nucleus. It is found in the chromosome. In terms of biological role, protamines substitute for histones in the chromatin of sperm during the haploid phase of spermatogenesis. They compact sperm DNA into a highly condensed, stable and inactive complex. This is Sperm protamine P1 (PRM1) from Dendrolagus dorianus (Doria's tree-kangaroo).